We begin with the raw amino-acid sequence, 98 residues long: Integration host factor subunit alpha (98 aa).

Positions 49-71 are disordered; that stretch reads FGNFDLRDKNQRPGRNPKTGEDI.

It belongs to the bacterial histone-like protein family. As to quaternary structure, heterodimer of an alpha and a beta chain.

In terms of biological role, this protein is one of the two subunits of integration host factor, a specific DNA-binding protein that functions in genetic recombination as well as in transcriptional and translational control. The protein is Integration host factor subunit alpha of Edwardsiella ictaluri (strain 93-146).